The primary structure comprises 347 residues: Dihydroorotase (347 aa).

Zn(2+)-binding residues include His17 and His19. Substrate is bound by residues 19 to 21 and Asn45; that span reads HLR. Positions 103, 140, and 178 each coordinate Zn(2+). Lys103 is subject to N6-carboxylysine. His140 lines the substrate pocket. Residue Leu223 coordinates substrate. Asp251 is a binding site for Zn(2+). Residue Asp251 is part of the active site. Positions 255 and 267 each coordinate substrate.

This sequence belongs to the metallo-dependent hydrolases superfamily. DHOase family. Class II DHOase subfamily. Homodimer. The cofactor is Zn(2+).

The catalysed reaction is (S)-dihydroorotate + H2O = N-carbamoyl-L-aspartate + H(+). It functions in the pathway pyrimidine metabolism; UMP biosynthesis via de novo pathway; (S)-dihydroorotate from bicarbonate: step 3/3. Its function is as follows. Catalyzes the reversible cyclization of carbamoyl aspartate to dihydroorotate. The polypeptide is Dihydroorotase (Citrobacter koseri (strain ATCC BAA-895 / CDC 4225-83 / SGSC4696)).